We begin with the raw amino-acid sequence, 362 residues long: Peptide chain release factor 1 (362 aa).

Q237 is modified (N5-methylglutamine).

It belongs to the prokaryotic/mitochondrial release factor family. Methylated by PrmC. Methylation increases the termination efficiency of RF1.

The protein resides in the cytoplasm. In terms of biological role, peptide chain release factor 1 directs the termination of translation in response to the peptide chain termination codons UAG and UAA. The protein is Peptide chain release factor 1 of Aeromonas salmonicida (strain A449).